Consider the following 202-residue polypeptide: N-(5'-phosphoribosyl)anthranilate isomerase (202 aa).

It belongs to the TrpF family.

The catalysed reaction is N-(5-phospho-beta-D-ribosyl)anthranilate = 1-(2-carboxyphenylamino)-1-deoxy-D-ribulose 5-phosphate. It participates in amino-acid biosynthesis; L-tryptophan biosynthesis; L-tryptophan from chorismate: step 3/5. The sequence is that of N-(5'-phosphoribosyl)anthranilate isomerase from Listeria monocytogenes serotype 4b (strain F2365).